A 415-amino-acid chain; its full sequence is Protein maelstrom homolog (415 aa).

A DNA-binding region (HMG box) is located at residues 4–73; it reads KKAARNAYFF…DPDSTSTYND (70 aa). The disordered stretch occupies residues 367 to 399; sequence SSDPKYSTDKSERSSFEPRGVKPYQGPSGGGRG. Positions 372–386 are enriched in basic and acidic residues; the sequence is YSTDKSERSSFEPRG.

Belongs to the maelstrom family.

It is found in the cytoplasm. The protein resides in the nucleus. Functionally, plays a central role during spermatogenesis by repressing transposable elements and preventing their mobilization, which is essential for the germline integrity. Acts via the piRNA metabolic process, which mediates the repression of transposable elements during meiosis by forming complexes composed of piRNAs and Piwi proteins and governs the methylation and subsequent repression of transposons. Its association with piP-bodies suggests a participation in the secondary piRNAs metabolic process. Required for the localization of germ-cell factors to the meiotic nuage. The chain is Protein maelstrom homolog (mael) from Xenopus tropicalis (Western clawed frog).